Here is a 383-residue protein sequence, read N- to C-terminus: tRNA-specific 2-thiouridylase MnmA (383 aa).

Residues 9 to 16 (GMSGGVDS) and Met-35 each bind ATP. The tract at residues 95 to 97 (NPD) is interaction with target base in tRNA. Cys-100 functions as the Nucleophile in the catalytic mechanism. Cys-100 and Cys-196 are disulfide-bonded. An ATP-binding site is contributed by Gly-124. Residues 146–148 (KDQ) are interaction with tRNA. Cys-196 serves as the catalytic Cysteine persulfide intermediate. Residues 308–309 (RY) are interaction with tRNA.

The protein belongs to the MnmA/TRMU family.

It is found in the cytoplasm. It catalyses the reaction S-sulfanyl-L-cysteinyl-[protein] + uridine(34) in tRNA + AH2 + ATP = 2-thiouridine(34) in tRNA + L-cysteinyl-[protein] + A + AMP + diphosphate + H(+). In terms of biological role, catalyzes the 2-thiolation of uridine at the wobble position (U34) of tRNA, leading to the formation of s(2)U34. This is tRNA-specific 2-thiouridylase MnmA from Burkholderia pseudomallei (strain 1106a).